The primary structure comprises 100 residues: Urease subunit gamma (100 aa).

The protein belongs to the urease gamma subunit family. As to quaternary structure, heterotrimer of UreA (gamma), UreB (beta) and UreC (alpha) subunits. Three heterotrimers associate to form the active enzyme.

The protein resides in the cytoplasm. The enzyme catalyses urea + 2 H2O + H(+) = hydrogencarbonate + 2 NH4(+). The protein operates within nitrogen metabolism; urea degradation; CO(2) and NH(3) from urea (urease route): step 1/1. This chain is Urease subunit gamma, found in Citrobacter koseri (strain ATCC BAA-895 / CDC 4225-83 / SGSC4696).